We begin with the raw amino-acid sequence, 963 residues long: Spliceosome associated factor 3, U4/U6 recycling protein (963 aa).

Low complexity predominate over residues 1–11 (MATAAATSASE). Disordered regions lie at residues 1–36 (MATAAATSASEPEAESKAGPKADGEEDEVKAARTRR) and 49–86 (KTMGPGWDQQEEGVSESDGDEYAMASSAESSPGEYEWE). Ala2 is modified (N-acetylalanine). Residues 2-351 (ATAAATSASE…LVPDLWIRYS (350 aa)) are mediates interaction with PRPF3. 2 positions are modified to phosphoserine: Ser10 and Ser16. Positions 14–23 (AESKAGPKAD) are enriched in basic and acidic residues. The stretch at 21–46 (KADGEEDEVKAARTRRKVLSRAVAAA) forms a coiled coil. A compositionally biased stretch (acidic residues) spans 57 to 69 (QQEEGVSESDGDE). Residues 82–110 (EYEWEYDEEEEKNQLEIERLEEQLSINVY) adopt a coiled-coil conformation. HAT repeat units follow at residues 126–158 (GELTKVRMARQKMSEIFPLTEELWLEWLHDEIS), 164–195 (LDREHVYDLFEKAVKDYICPNIWLEYGQYSVG), 201–237 (GGLEKVRSVFERALSSVGLHMSKGLALWEAYREFESA), 242–275 (ARLEKVHSLFRRQLAIPLYDMEATFAEYEEWSED), 324–356 (GDPARIQLIFERALVENCLVPDLWIRYSQYLDR), 359–391 (KVKDLVLSVHNRAIRNCPWTVALWSRYLLAMER), 394–430 (VDHQVISVTFEKALNAGFIQATDYVEIWQAYLDYLRR), and 487–520 (NNMQKARELWDSIMTRGNAKYANMWLEYYNLERA). Ser215 bears the Phosphoserine mark. Residues 487 to 520 (NNMQKARELWDSIMTRGNAKYANMWLEYYNLERA) form a required for interaction with USP4 region. The tract at residues 537–953 (CTSDYPEHVC…AATEAPKMSN (417 aa)) is necessary and sufficient for U6 snRNA binding. The stretch at 559 to 619 (LEDWDIAVQK…ALKKKKKIRG (61 aa)) forms a coiled coil. Positions 600–670 (QRKRARAEKK…EVAPGPAGKC (71 aa)) are required for nuclear localization. The Nuclear localization signal motif lies at 601 to 608 (RKRARAEK). Over residues 608–619 (KKALKKKKKIRG) the composition is skewed to basic and acidic residues. The interval 608–712 (KKALKKKKKI…SITVFVSNLP (105 aa)) is disordered. The segment covering 620-635 (PEKRGADEDDEKEWGD) has biased composition (basic residues). Residues 644–657 (RRRVENSIPAAGET) are compositionally biased toward acidic residues. Ser650 is modified (phosphoserine). Thr657 bears the Phosphothreonine mark. A compositionally biased stretch (basic and acidic residues) spans 695-712 (VLHDSSKDSITVFVSNLP). Residues 704-782 (ITVFVSNLPY…RPMFVSPCVD (79 aa)) form the RRM 1 domain. Phosphoserine occurs at positions 769, 795, and 852. In terms of domain architecture, RRM 2 spans 801–878 (HKLFISGLPF…NVIKVAISNP (78 aa)). Over residues 900 to 909 (PQTYGARGKG) the composition is skewed to basic and acidic residues. Arg906 bears the Omega-N-methylarginine mark.

As to quaternary structure, component of the 7SK snRNP complex at least composed of P-TEFb (composed of CDK9 and CCNT1/cyclin-T1), HEXIM1, HEXIM2, BCDIN3, SART3 proteins and 7SK and U6 snRNAs. Interacts with AGO1 and AGO2. Interacts with PRPF3 and USP4; the interaction with PRPF3 is direct and recruits USP4 to its substrate PRPF3. Interacts with USP15; the interaction is direct.

The protein resides in the nucleus. It is found in the nucleoplasm. It localises to the cajal body. The protein localises to the nucleus speckle. Its subcellular location is the cytoplasm. Its function is as follows. U6 snRNP-binding protein that functions as a recycling factor of the splicing machinery. Promotes the initial reassembly of U4 and U6 snRNPs following their ejection from the spliceosome during its maturation. Also binds U6atac snRNPs and may function as a recycling factor for U4atac/U6atac spliceosomal snRNP, an initial step in the assembly of U12-type spliceosomal complex. The U12-type spliceosomal complex plays a role in the splicing of introns with non-canonical splice sites. May also function as a substrate-targeting factor for deubiquitinases like USP4 and USP15. Recruits USP4 to ubiquitinated PRPF3 within the U4/U5/U6 tri-snRNP complex, promoting PRPF3 deubiquitination and thereby regulating the spliceosome U4/U5/U6 tri-snRNP spliceosomal complex disassembly. May also recruit the deubiquitinase USP15 to histone H2B and mediate histone deubiquitination, thereby regulating gene expression and/or DNA repair. May play a role in hematopoiesis probably through transcription regulation of specific genes including MYC. The chain is Spliceosome associated factor 3, U4/U6 recycling protein from Pongo abelii (Sumatran orangutan).